Here is a 295-residue protein sequence, read N- to C-terminus: Xyloglucan endotransglucosylase/hydrolase (295 aa).

The N-terminal stretch at 1 to 23 (MAVSSTPWALVALFLMASSTVMA) is a signal peptide. In terms of domain architecture, GH16 spans 25–222 (PPRKAIDVPF…WANAPFIASY (198 aa)). E108 serves as the catalytic Nucleophile. E112 serves as the catalytic Proton donor. Position 112 (E112) interacts with xyloglucan. An N-linked (GlcNAc...) asparagine glycan is attached at N116. Xyloglucan-binding positions include 125-127 (QTN), 135-137 (NRE), 201-202 (DW), and G206. Disulfide bonds link C230–C239 and C276–C289. R281 contributes to the xyloglucan binding site.

Belongs to the glycosyl hydrolase 16 family. XTH group 1 subfamily. Post-translationally, contains at least one intrachain disulfide bond essential for its enzymatic activity. In terms of processing, the N-glycan consists of an (GlcNAc)2(Hex)6 oligosaccharide; not essential for its enzymatic activity.

The protein localises to the secreted. The protein resides in the cell wall. It is found in the extracellular space. Its subcellular location is the apoplast. The enzyme catalyses breaks a beta-(1-&gt;4) bond in the backbone of a xyloglucan and transfers the xyloglucanyl segment on to O-4 of the non-reducing terminal glucose residue of an acceptor, which can be a xyloglucan or an oligosaccharide of xyloglucan.. In terms of biological role, catalyzes xyloglucan endohydrolysis (XEH) and/or endotransglycosylation (XET). Cleaves and religates xyloglucan polymers, an essential constituent of the primary cell wall, and thereby participates in cell wall construction of growing tissues. This Brassica oleracea var. botrytis (Cauliflower) protein is Xyloglucan endotransglucosylase/hydrolase (XET16A).